Consider the following 60-residue polypeptide: Large ribosomal subunit protein bL33 (60 aa).

The protein belongs to the bacterial ribosomal protein bL33 family.

This chain is Large ribosomal subunit protein bL33, found in Chlorobium limicola (strain DSM 245 / NBRC 103803 / 6330).